A 321-amino-acid polypeptide reads, in one-letter code: uncharacterized protein (321 aa).

The active-site Proton donor is tyrosine 49. Histidine 106 is a binding site for substrate.

The protein belongs to the aldo/keto reductase family.

This is an uncharacterized protein from Caenorhabditis elegans.